The following is a 79-amino-acid chain: Sec-independent protein translocase protein TatA (79 aa).

A helical membrane pass occupies residues 1–21 (MGGFTSIWHWVIVLLVIVLLF). Residues 48–79 (EEEAKNEPKTLDAQVTQAKVHESSEIKNKQEG) are disordered. The span at 66 to 79 (KVHESSEIKNKQEG) shows a compositional bias: basic and acidic residues.

This sequence belongs to the TatA/E family. As to quaternary structure, the Tat system comprises two distinct complexes: a TatABC complex, containing multiple copies of TatA, TatB and TatC subunits, and a separate TatA complex, containing only TatA subunits. Substrates initially bind to the TatABC complex, which probably triggers association of the separate TatA complex to form the active translocon.

It localises to the cell inner membrane. Part of the twin-arginine translocation (Tat) system that transports large folded proteins containing a characteristic twin-arginine motif in their signal peptide across membranes. TatA could form the protein-conducting channel of the Tat system. The chain is Sec-independent protein translocase protein TatA from Helicobacter acinonychis (strain Sheeba).